The primary structure comprises 403 residues: Phosphoglycerate kinase (403 aa).

Residues 22–24 (DLN), Arg37, 60–63 (HLGR), Arg119, and Arg156 contribute to the substrate site. ATP is bound by residues Lys206, Gly302, Glu333, and 359–362 (GGDS).

Belongs to the phosphoglycerate kinase family. In terms of assembly, monomer.

Its subcellular location is the cytoplasm. The enzyme catalyses (2R)-3-phosphoglycerate + ATP = (2R)-3-phospho-glyceroyl phosphate + ADP. Its pathway is carbohydrate degradation; glycolysis; pyruvate from D-glyceraldehyde 3-phosphate: step 2/5. This chain is Phosphoglycerate kinase (pgk), found in Streptomyces coelicolor (strain ATCC BAA-471 / A3(2) / M145).